Here is a 382-residue protein sequence, read N- to C-terminus: Queuine tRNA-ribosyltransferase (382 aa).

Residue D93 is the Proton acceptor of the active site. Residues 93–97 (DSGGF), D147, Q191, and G218 contribute to the substrate site. The tract at residues 249–255 (GVGKPED) is RNA binding. The active-site Nucleophile is D268. The RNA binding; important for wobble base 34 recognition stretch occupies residues 273–277 (TRNAR). C306, C308, C311, and H337 together coordinate Zn(2+).

The protein belongs to the queuine tRNA-ribosyltransferase family. In terms of assembly, homodimer. Within each dimer, one monomer is responsible for RNA recognition and catalysis, while the other monomer binds to the replacement base PreQ1. Requires Zn(2+) as cofactor.

The catalysed reaction is 7-aminomethyl-7-carbaguanine + guanosine(34) in tRNA = 7-aminomethyl-7-carbaguanosine(34) in tRNA + guanine. The protein operates within tRNA modification; tRNA-queuosine biosynthesis. Catalyzes the base-exchange of a guanine (G) residue with the queuine precursor 7-aminomethyl-7-deazaguanine (PreQ1) at position 34 (anticodon wobble position) in tRNAs with GU(N) anticodons (tRNA-Asp, -Asn, -His and -Tyr). Catalysis occurs through a double-displacement mechanism. The nucleophile active site attacks the C1' of nucleotide 34 to detach the guanine base from the RNA, forming a covalent enzyme-RNA intermediate. The proton acceptor active site deprotonates the incoming PreQ1, allowing a nucleophilic attack on the C1' of the ribose to form the product. After dissociation, two additional enzymatic reactions on the tRNA convert PreQ1 to queuine (Q), resulting in the hypermodified nucleoside queuosine (7-(((4,5-cis-dihydroxy-2-cyclopenten-1-yl)amino)methyl)-7-deazaguanosine). This chain is Queuine tRNA-ribosyltransferase, found in Haemophilus influenzae (strain PittEE).